A 361-amino-acid polypeptide reads, in one-letter code: Outer membrane protein P2 (361 aa).

An N-terminal signal peptide occupies residues 1–20; sequence MKKTLAALIVGAFAASAANA.

Belongs to the Gram-negative porin family. In terms of assembly, homotrimer.

The protein resides in the cell outer membrane. Forms pores that allow passive diffusion of small molecules across the outer membrane. This chain is Outer membrane protein P2 (ompP2), found in Haemophilus influenzae.